Reading from the N-terminus, the 131-residue chain is Large ribosomal subunit protein bL19 (131 aa).

Belongs to the bacterial ribosomal protein bL19 family.

This protein is located at the 30S-50S ribosomal subunit interface and may play a role in the structure and function of the aminoacyl-tRNA binding site. The polypeptide is Large ribosomal subunit protein bL19 (Anaeromyxobacter sp. (strain K)).